Consider the following 438-residue polypeptide: Enolase (438 aa).

The substrate site is built by His-159 and Glu-168. Glu-211 acts as the Proton donor in catalysis. 3 residues coordinate Mg(2+): Asp-246, Glu-297, and Asp-322. The substrate site is built by Glu-297 and Asp-322. Lys-347 (proton acceptor) is an active-site residue. Residues 374 to 377 and Lys-398 each bind substrate; that span reads SHRS.

Belongs to the enolase family. In terms of assembly, homodimer. It depends on Mg(2+) as a cofactor.

It is found in the cytoplasm. The enzyme catalyses (2R)-2-phosphoglycerate = phosphoenolpyruvate + H2O. It participates in carbohydrate degradation; glycolysis; pyruvate from D-glyceraldehyde 3-phosphate: step 4/5. The sequence is that of Enolase (ENO1) from Cryphonectria parasitica (Chestnut blight fungus).